The following is a 392-amino-acid chain: UDP-N-acetylglucosamine--N-acetylmuramyl-(pentapeptide) pyrophosphoryl-undecaprenol N-acetylglucosamine transferase (392 aa).

UDP-N-acetyl-alpha-D-glucosamine-binding positions include 14-16, Asn-124, Arg-167, Ser-195, Ile-251, and Gln-296; that span reads TGG.

The protein belongs to the glycosyltransferase 28 family. MurG subfamily.

The protein localises to the cell inner membrane. The catalysed reaction is di-trans,octa-cis-undecaprenyl diphospho-N-acetyl-alpha-D-muramoyl-L-alanyl-D-glutamyl-meso-2,6-diaminopimeloyl-D-alanyl-D-alanine + UDP-N-acetyl-alpha-D-glucosamine = di-trans,octa-cis-undecaprenyl diphospho-[N-acetyl-alpha-D-glucosaminyl-(1-&gt;4)]-N-acetyl-alpha-D-muramoyl-L-alanyl-D-glutamyl-meso-2,6-diaminopimeloyl-D-alanyl-D-alanine + UDP + H(+). It participates in cell wall biogenesis; peptidoglycan biosynthesis. Its function is as follows. Cell wall formation. Catalyzes the transfer of a GlcNAc subunit on undecaprenyl-pyrophosphoryl-MurNAc-pentapeptide (lipid intermediate I) to form undecaprenyl-pyrophosphoryl-MurNAc-(pentapeptide)GlcNAc (lipid intermediate II). This is UDP-N-acetylglucosamine--N-acetylmuramyl-(pentapeptide) pyrophosphoryl-undecaprenol N-acetylglucosamine transferase from Sphingopyxis alaskensis (strain DSM 13593 / LMG 18877 / RB2256) (Sphingomonas alaskensis).